Here is a 484-residue protein sequence, read N- to C-terminus: UDP-N-acetylmuramoyl-L-alanyl-D-glutamate--L-lysine ligase (484 aa).

Ser43 provides a ligand contact to UDP-N-acetyl-alpha-D-muramoyl-L-alanyl-D-glutamate. 119–125 provides a ligand contact to ATP; that stretch reads GTKGKTT. UDP-N-acetyl-alpha-D-muramoyl-L-alanyl-D-glutamate-binding positions include 161–162, Ser188, and Arg196; that span reads TT. Lys230 carries the post-translational modification N6-carboxylysine. An L-lysine recognition motif motif is present at residues 405–408; the sequence is DDPN.

This sequence belongs to the MurCDEF family. MurE subfamily. Post-translationally, carboxylation is probably crucial for Mg(2+) binding and, consequently, for the gamma-phosphate positioning of ATP.

The protein localises to the cytoplasm. It catalyses the reaction UDP-N-acetyl-alpha-D-muramoyl-L-alanyl-D-glutamate + L-lysine + ATP = UDP-N-acetyl-alpha-D-muramoyl-L-alanyl-gamma-D-glutamyl-L-lysine + ADP + phosphate + H(+). Its pathway is cell wall biogenesis; peptidoglycan biosynthesis. Its function is as follows. Catalyzes the addition of L-lysine to the nucleotide precursor UDP-N-acetylmuramoyl-L-alanyl-D-glutamate (UMAG) in the biosynthesis of bacterial cell-wall peptidoglycan. The protein is UDP-N-acetylmuramoyl-L-alanyl-D-glutamate--L-lysine ligase of Streptococcus agalactiae serotype Ia (strain ATCC 27591 / A909 / CDC SS700).